The chain runs to 671 residues: Receptor-interacting serine/threonine-protein kinase 1 (671 aa).

Position 6 is a phosphoserine; by IKKA and IKKB (S6). Residues 17–289 (FLESAELDSG…GIEEKFRPFY (273 aa)) enclose the Protein kinase domain. S20 bears the Phosphoserine; by autocatalysis mark. Residues 23-31 (LDSGGFGKV) and K45 each bind ATP. Position 25 is a phosphoserine; by IKKA and IKKB (S25). D138 functions as the Proton acceptor in the catalytic mechanism. S161 is subject to Phosphoserine; by RIPK3 and autocatalysis. At S166 the chain carries Phosphoserine; by autocatalysis. Positions 290-582 (LSQLEESVEE…QAIFDNTTSL (293 aa)) are interaction with SQSTM1. Residue S303 is modified to Phosphoserine. A phosphoserine; by MAP3K7 mark is found at S320, S331, and S333. The span at 331–348 (SRSNSATEQPGSLHSSQG) shows a compositional bias: polar residues. Residues 331-354 (SRSNSATEQPGSLHSSQGLGMGPV) form a disordered region. K377 participates in a covalent cross-link: Glycyl lysine isopeptide (Lys-Gly) (interchain with G-Cter in ubiquitin). Y384 carries the phosphotyrosine modification. Residues 389-455 (SRMDRQTKQQ…GNAVHQPSGL (67 aa)) are disordered. The segment covering 428–444 (NFQNTEGKGTAYSSAAS) has biased composition (polar residues). An RIP homotypic interaction motif (RHIM) motif is present at residues 531 to 547 (YTIYNSTGIQIGAYNYM). The region spanning 583-669 (TDKHLDPIRE…DLLSSLIYVS (87 aa)) is the Death domain. R603 carries (Microbial infection) N-beta-linked (GlcNAc) arginine glycosylation.

This sequence belongs to the protein kinase superfamily. TKL Ser/Thr protein kinase family. Homodimer. Interacts (via RIP homotypic interaction motif) with RIPK3 (via RIP homotypic interaction motif); this interaction induces RIPK1 phosphorylation and formation of a RIPK1-RIPK3 necroptosis-inducing complex. Upon TNF-induced necrosis, the RIPK1-RIPK3 dimer further interacts with PGAM5 and MLKL; the formation of this complex leads to PGAM5 phosphorylation and increase in PGAM5 phosphatase activity. Interacts (via the death domain) with TNFRSF6 (via the death domain) and TRADD (via the death domain). Is recruited by TRADD to TNFRSF1A in a TNF-dependent process. Binds RNF216, EGFR, IKBKG, TRAF1, TRAF2 and TRAF3. Interacts with BNLF1. Interacts with SQSTM1 upon TNF-alpha stimulation. May interact with MAVS/IPS1. Interacts with ZFAND5. Interacts with RBCK1. Interacts with ZBP1. Interacts with BIRC2/c-IAP1, BIRC3/c-IAP2 and XIAP/BIRC4. Interacts (via kinase domain) with DAB2IP (via Ras-GAP domain); the interaction occurs in a TNF-alpha-dependent manner. Interacts with ARHGEF2. Interacts (via protein kinase domain) with RFFL; involved in RIPK1 ubiquitination. Interacts with RNF34; involved in RIPK1 ubiquitination. Interacts with TICAM1 and this interaction is enhanced in the presence of WDFY1. Interacts with PELI1. Interacts (via death domain) with CRADD (via death domain); the interaction is direct. Component of complex IIa composed of at least RIPK1, FADD and CASP8. Component of the AIM2 PANoptosome complex, a multiprotein complex that drives inflammatory cell death (PANoptosis). Interacts with MAP3K7, CFLAR, CASP8, FADD and NEMO. Interacts with TAX1BP1; this interaction negatively regulates RIPK1 ubiquitination. Interacts with GRB2. Interacts with DDX24; this interaction disrupts RLR signaling activation of IFN-dependent transcription factor IRF7. As to quaternary structure, (Microbial infection) Interacts with mumps virus protein SH; this interaction inhibits downstream NF-kappa-B pathway activation. In terms of assembly, (Microbial infection) Interacts with Murid herpesvirus 1 protein RIR1. (Microbial infection) Interacts (via RIP homotypic interaction motif) with herpes simplex virus 1/HHV-1 protein RIR1/ICP6 (via RIP homotypic interaction motif); this interaction prevents necroptosis activation. As to quaternary structure, (Microbial infection) Interacts (via RIP homotypic interaction motif) with herpes simplex virus 2/HHV-2 protein RIR1/ICP10 (via RIP homotypic interaction motif); this interaction prevents necroptosis activation. Post-translationally, (Microbial infection) Proteolytically cleaved by S.flexneri OspD3 within the RIP homotypic interaction motif (RHIM), leading to its degradation and inhibition of necroptosis. In terms of processing, proteolytically cleaved by CASP8 at Asp-324. Cleavage is crucial for limiting TNF-induced apoptosis, necroptosis and inflammatory response. Cleavage abolishes NF-kappa-B activation and enhances the interaction of TRADD with FADD. Proteolytically cleaved by CASP6 during intrinsic apoptosis. RIPK1 and RIPK3 undergo reciprocal auto- and trans-phosphorylation. Phosphorylation of Ser-161 by RIPK3 is necessary for the formation of the necroptosis-inducing complex. Phosphorylation at Ser-25 represses its kinase activity and consequently prevents TNF-mediated RIPK1-dependent cell death. Phosphorylated at Ser-320 by MAP3K7 which requires prior ubiquitination with 'Lys-63'-linked chains by BIRC2/c-IAP1 and BIRC3/c-IAP2. This phosphorylation positively regulates RIPK1 interaction with RIPK3 to promote necroptosis but negatively regulates RIPK1 kinase activity and its interaction with FADD to mediate apoptosis. Post-translationally, deubiquitinated by USP7; this modification is required for TNF-alpha-induced apoptosis. In terms of processing, ubiquitinated with 'Lys-11'-, 'Lys-48'-, 'Lys-63'- and linear-linked type ubiquitin. Polyubiquitination with 'Lys-63'-linked chains by TRAF2 induces association with the IKK complex. Deubiquitination of 'Lys-63'-linked chains and polyubiquitination with 'Lys-48'-linked chains by TNFAIP3 leads to RIPK1 proteasomal degradation and consequently down-regulates TNF-alpha-induced NF-kappa-B signaling. 'Lys-48'-linked polyubiquitination by RFFL or RNF34 also promotes proteasomal degradation and negatively regulates TNF-alpha-induced NF-kappa-B signaling. Linear polyubiquitinated; the head-to-tail linear polyubiquitination ('Met-1'-linked) is mediated by the LUBAC complex and decreases protein kinase activity. Deubiquitination of linear polyubiquitin by CYLD promotes the kinase activity. Polyubiquitinated with 'Lys-48' and 'Lys-63'-linked chains by BIRC2/c-IAP1 and BIRC3/c-IAP2, leading to activation of NF-kappa-B. Ubiquitinated with 'Lys-63'-linked chains by PELI1. Ubiquitination at Lys-377 with 'Lys-63'-linked chains by BIRC2/c-IAP1 and BIRC3/c-IAP2 is essential for its phosphorylation at Ser-320 mediated by MAP3K7. This ubiquitination is required for NF-kB activation, suppresses RIPK1 kinase activity and plays a critical role in preventing cell death during embryonic development. (Microbial infection) Glycosylated at Arg-603 by enteropathogenic E.coli protein NleB1: arginine GlcNAcylation prevents homotypic/heterotypic death domain interactions.

It is found in the cytoplasm. The protein resides in the cell membrane. It catalyses the reaction L-seryl-[protein] + ATP = O-phospho-L-seryl-[protein] + ADP + H(+). The enzyme catalyses L-threonyl-[protein] + ATP = O-phospho-L-threonyl-[protein] + ADP + H(+). Its activity is regulated as follows. Serine-threonine kinase activity is inhibited by linear polyubiquitination ('Met-1'-linked) by the LUBAC complex. Inhibited by necrostatins, including necrostatin-1, necrostatin-3 and necrostatin-4. Functionally, serine-threonine kinase which is a key regulator of TNF-mediated apoptosis, necroptosis and inflammatory pathways. Exhibits kinase activity-dependent functions that regulate cell death and kinase-independent scaffold functions regulating inflammatory signaling and cell survival. Has kinase-independent scaffold functions: upon binding of TNF to TNFR1, RIPK1 is recruited to the TNF-R1 signaling complex (TNF-RSC also known as complex I) where it acts as a scaffold protein promoting cell survival, in part, by activating the canonical NF-kappa-B pathway. Kinase activity is essential to regulate necroptosis and apoptosis, two parallel forms of cell death: upon activation of its protein kinase activity, regulates assembly of two death-inducing complexes, namely complex IIa (RIPK1-FADD-CASP8), which drives apoptosis, and the complex IIb (RIPK1-RIPK3-MLKL), which drives necroptosis. RIPK1 is required to limit CASP8-dependent TNFR1-induced apoptosis. In normal conditions, RIPK1 acts as an inhibitor of RIPK3-dependent necroptosis, a process mediated by RIPK3 component of complex IIb, which catalyzes phosphorylation of MLKL upon induction by ZBP1. Inhibits RIPK3-mediated necroptosis via FADD-mediated recruitment of CASP8, which cleaves RIPK1 and limits TNF-induced necroptosis. Required to inhibit apoptosis and necroptosis during embryonic development: acts by preventing the interaction of TRADD with FADD thereby limiting aberrant activation of CASP8. In addition to apoptosis and necroptosis, also involved in inflammatory response by promoting transcriptional production of pro-inflammatory cytokines, such as interleukin-6 (IL6). Phosphorylates RIPK3: RIPK1 and RIPK3 undergo reciprocal auto- and trans-phosphorylation. Phosphorylates DAB2IP at 'Ser-728' in a TNF-alpha-dependent manner, and thereby activates the MAP3K5-JNK apoptotic cascade. Required for ZBP1-induced NF-kappa-B activation in response to DNA damage. This chain is Receptor-interacting serine/threonine-protein kinase 1, found in Homo sapiens (Human).